The sequence spans 254 residues: E3 ubiquitin-protein ligase NEURL3 (254 aa).

Positions 17-174 constitute an NHR domain; it reads ALSFHGNATG…TTKAIELLDP (158 aa). The RING-type zinc finger occupies 197–236; it reads CVICFHNTANTRLMPCGHSHFCGSCAWHIFKDTARCPICR.

As to expression, expressed in alveolar epithelial type II cells.

Its subcellular location is the cytoplasm. It carries out the reaction S-ubiquitinyl-[E2 ubiquitin-conjugating enzyme]-L-cysteine + [acceptor protein]-L-lysine = [E2 ubiquitin-conjugating enzyme]-L-cysteine + N(6)-ubiquitinyl-[acceptor protein]-L-lysine.. Its pathway is protein modification; protein ubiquitination. Functionally, E3 ubiquitin-protein ligase that plays a role in various biological processes such as lung development or innate immunity. Seems to utilize UBE2E1. Promotes innate antiviral response by catalyzing 'Lys-63'-linked ubiquitination of IRF7. Plays an essential role in TLR4-mediated activation of MAPK pathways by promoting 'Lys-48'-linked polyubiquitination of the phosphatase DUSP1/MKP1. In Mus musculus (Mouse), this protein is E3 ubiquitin-protein ligase NEURL3 (Neurl3).